We begin with the raw amino-acid sequence, 426 residues long: MKHLTEMVRQHKAGKTNAIYAVCSAHPLVLEAAIRYASANQTPLLIEATSNQVDQFGGYTGMTPADFRGFVCQLADSLNFPQDALILGGDHLGPNRWQNLPAAQAMANADDLIKSYVAAGFKKIHLDCSMSCQDDPIPLTDDIVAERAARLAKVAEETCREHFGEADLEYVIGTEVPVPGGAHETLSELAVTTPDAARATLEAHRHAFEKQGLNAIWPRIIALVVQPGVEFDHTNVIDYQPAKASALSQMVENYETLIFEAHSTDYQTPQSLRQLVIDHFAILKVGPALTFALREALFSLAAIEEELVPAKACSGLRQVLENVMLDRPEYWQSHYHGDGNARRLARGYSYSDRVRYYWPDSQIDDAFAHLVRNLADSPIPLPLISQYLPLQYVKVRSGELQPTPRELIINHIQDILAQYHTACEGQ.

It belongs to the GatZ/KbaZ family. KbaZ subfamily. As to quaternary structure, forms a complex with KbaY.

The protein operates within carbohydrate metabolism; D-tagatose 6-phosphate degradation; D-glyceraldehyde 3-phosphate and glycerone phosphate from D-tagatose 6-phosphate: step 2/2. In terms of biological role, component of the tagatose-1,6-bisphosphate aldolase KbaYZ that is required for full activity and stability of the Y subunit. Could have a chaperone-like function for the proper and stable folding of KbaY. When expressed alone, KbaZ does not show any aldolase activity. The sequence is that of D-tagatose-1,6-bisphosphate aldolase subunit KbaZ from Shigella flexneri.